The following is a 75-amino-acid chain: Penaeidin-3m (75 aa).

The signal sequence occupies residues 1 to 19; sequence MRLVVCLVFLASFALVCQG. At glutamine 20 the chain carries Pyrrolidone carboxylic acid. Cystine bridges form between cysteine 44–cysteine 59, cysteine 48–cysteine 66, and cysteine 60–cysteine 67. Residue serine 74 is modified to Serine amide.

This sequence belongs to the penaeidin family.

The protein localises to the cytoplasmic granule. Functionally, antibacterial and antifungal activity. Presents chitin-binding activity. This is Penaeidin-3m from Penaeus setiferus (Atlantic white shrimp).